The chain runs to 38 residues: Cytochrome b6-f complex subunit 5 (38 aa).

A helical transmembrane segment spans residues Leu-5–Ala-25.

It belongs to the PetG family. The 4 large subunits of the cytochrome b6-f complex are cytochrome b6, subunit IV (17 kDa polypeptide, PetD), cytochrome f and the Rieske protein, while the 4 small subunits are PetG, PetL, PetM and PetN. The complex functions as a dimer.

The protein resides in the cellular thylakoid membrane. Functionally, component of the cytochrome b6-f complex, which mediates electron transfer between photosystem II (PSII) and photosystem I (PSI), cyclic electron flow around PSI, and state transitions. PetG is required for either the stability or assembly of the cytochrome b6-f complex. The sequence is that of Cytochrome b6-f complex subunit 5 from Microcystis aeruginosa (strain NIES-843 / IAM M-2473).